We begin with the raw amino-acid sequence, 190 residues long: Holliday junction branch migration complex subunit RuvA (190 aa).

The domain I stretch occupies residues 1–64 (MIGSLTGIIE…DNLTQLYGFL (64 aa)). The interval 65 to 142 (DKQEQDYMRM…KMPIEETLII (78 aa)) is domain II. Lys-143 is a region of interest (flexible linker). A domain III region spans residues 143–190 (KEDDSLAALISLGYDKLKAFNAIQEIKSDFPNANIQEIIRKALQKLSQ).

It belongs to the RuvA family. Homotetramer. Forms an RuvA(8)-RuvB(12)-Holliday junction (HJ) complex. HJ DNA is sandwiched between 2 RuvA tetramers; dsDNA enters through RuvA and exits via RuvB. An RuvB hexamer assembles on each DNA strand where it exits the tetramer. Each RuvB hexamer is contacted by two RuvA subunits (via domain III) on 2 adjacent RuvB subunits; this complex drives branch migration. In the full resolvosome a probable DNA-RuvA(4)-RuvB(12)-RuvC(2) complex forms which resolves the HJ.

It localises to the cytoplasm. Functionally, the RuvA-RuvB-RuvC complex processes Holliday junction (HJ) DNA during genetic recombination and DNA repair, while the RuvA-RuvB complex plays an important role in the rescue of blocked DNA replication forks via replication fork reversal (RFR). RuvA specifically binds to HJ cruciform DNA, conferring on it an open structure. The RuvB hexamer acts as an ATP-dependent pump, pulling dsDNA into and through the RuvAB complex. HJ branch migration allows RuvC to scan DNA until it finds its consensus sequence, where it cleaves and resolves the cruciform DNA. This chain is Holliday junction branch migration complex subunit RuvA, found in Ehrlichia canis (strain Jake).